We begin with the raw amino-acid sequence, 346 residues long: Protein RecA (346 aa).

67–74 contributes to the ATP binding site; that stretch reads GPESSGKT.

This sequence belongs to the RecA family.

Its subcellular location is the cytoplasm. Functionally, can catalyze the hydrolysis of ATP in the presence of single-stranded DNA, the ATP-dependent uptake of single-stranded DNA by duplex DNA, and the ATP-dependent hybridization of homologous single-stranded DNAs. It interacts with LexA causing its activation and leading to its autocatalytic cleavage. This chain is Protein RecA, found in Mycobacterium marinum (strain ATCC BAA-535 / M).